The chain runs to 533 residues: MNSPASFVKSLLAQCCLGGICEWVVCPGARNMALLQVLAAAEDLVKWTHFDERSAAFFALGRIQDIGLPVAVVTTSGTAAAELLPAVVEAYYQRRPLLLLTADRPAACRGSAAPQAIEQADLFGIYAPTIDLETPESLPEDILQDWDYASPLHINVCLPDPDPAWNPGSCDLYPAEPPEENGFRGSLAELARALRFKSRGGLVVMIGGLDPTEQAPARWLANELKAPVVADATSGLREELAHLALTDADALLREHPPAVLLRLGDVPVARFWRDLEDIPATEVFSVTRTGFSGLARPSSVVTGDLEAILHALGDIDTVGDVNGLRAMNKRRKALMEELLITCPESEQAMVRSFSCFAADGDCIYLGNSMPVRYWNSFAQTSIPTENVRANRGTNGIDGQISGFLGVSARCSRSWALVGDLTAMYDSNALALLPQLDRGTRVLGVINNGGGGIFRTLPGADGQPETMRKLLVQPHAHSFKAIAEQWGMRYLTIRTAEDFDQLDSLEENSQTLVELIPDREQTEQIRLRLANAQV.

The protein belongs to the TPP enzyme family. MenD subfamily. Homodimer. It depends on Mg(2+) as a cofactor. Requires Mn(2+) as cofactor. The cofactor is thiamine diphosphate.

It carries out the reaction isochorismate + 2-oxoglutarate + H(+) = 5-enolpyruvoyl-6-hydroxy-2-succinyl-cyclohex-3-ene-1-carboxylate + CO2. It functions in the pathway quinol/quinone metabolism; 1,4-dihydroxy-2-naphthoate biosynthesis; 1,4-dihydroxy-2-naphthoate from chorismate: step 2/7. Its pathway is quinol/quinone metabolism; menaquinone biosynthesis. In terms of biological role, catalyzes the thiamine diphosphate-dependent decarboxylation of 2-oxoglutarate and the subsequent addition of the resulting succinic semialdehyde-thiamine pyrophosphate anion to isochorismate to yield 2-succinyl-5-enolpyruvyl-6-hydroxy-3-cyclohexene-1-carboxylate (SEPHCHC). This Akkermansia muciniphila (strain ATCC BAA-835 / DSM 22959 / JCM 33894 / BCRC 81048 / CCUG 64013 / CIP 107961 / Muc) protein is 2-succinyl-5-enolpyruvyl-6-hydroxy-3-cyclohexene-1-carboxylate synthase.